The primary structure comprises 132 residues: MSKIDKPLDSWREELTEEQFHICRLGGTERAFSGEYHATKTPGIYHCTCCGTALFDSDAKYDSGSGWPSYFQPVDAEAVRELDDFSHGMHRIEVRCGRCDAHLGHVFPDGPRPTGLRYCINSASLKLVPRES.

One can recognise a MsrB domain in the interval 8–130; that stretch reads LDSWREELTE…NSASLKLVPR (123 aa). C47, C50, C96, and C99 together coordinate Zn(2+). The active-site Nucleophile is the C119.

It belongs to the MsrB Met sulfoxide reductase family. The cofactor is Zn(2+).

It catalyses the reaction L-methionyl-[protein] + [thioredoxin]-disulfide + H2O = L-methionyl-(R)-S-oxide-[protein] + [thioredoxin]-dithiol. The sequence is that of Peptide methionine sulfoxide reductase MsrB from Pseudomonas aeruginosa (strain UCBPP-PA14).